Reading from the N-terminus, the 284-residue chain is NAD kinase (284 aa).

D65 functions as the Proton acceptor in the catalytic mechanism. NAD(+)-binding positions include 65–66 (DG), 139–140 (ND), R150, R167, D169, and Q239.

The protein belongs to the NAD kinase family. It depends on a divalent metal cation as a cofactor.

It localises to the cytoplasm. It carries out the reaction NAD(+) + ATP = ADP + NADP(+) + H(+). In terms of biological role, involved in the regulation of the intracellular balance of NAD and NADP, and is a key enzyme in the biosynthesis of NADP. Catalyzes specifically the phosphorylation on 2'-hydroxyl of the adenosine moiety of NAD to yield NADP. In Desulfatibacillum aliphaticivorans, this protein is NAD kinase.